The primary structure comprises 224 residues: Haloacetate dehalogenase H-2 (224 aa).

Residue Asp10 is the Nucleophile of the active site.

The protein belongs to the HAD-like hydrolase superfamily. S-2-haloalkanoic acid dehalogenase family.

The enzyme catalyses a haloacetate + H2O = a halide anion + glycolate + H(+). This Moraxella sp. (strain B) protein is Haloacetate dehalogenase H-2 (dehH2).